The sequence spans 444 residues: Tubulin beta-6 chain (444 aa).

Positions 11, 69, 138, 142, 143, 144, 204, and 226 each coordinate GTP. Position 69 (glutamate 69) interacts with Mg(2+).

This sequence belongs to the tubulin family. As to quaternary structure, dimer of alpha and beta chains. A typical microtubule is a hollow water-filled tube with an outer diameter of 25 nm and an inner diameter of 15 nM. Alpha-beta heterodimers associate head-to-tail to form protofilaments running lengthwise along the microtubule wall with the beta-tubulin subunit facing the microtubule plus end conferring a structural polarity. Microtubules usually have 13 protofilaments but different protofilament numbers can be found in some organisms and specialized cells. Requires Mg(2+) as cofactor. As to expression, expressed in roots, leaf sheaths, anthers, and suspension cultured cells.

Its subcellular location is the cytoplasm. The protein localises to the cytoskeleton. In terms of biological role, tubulin is the major constituent of microtubules, a cylinder consisting of laterally associated linear protofilaments composed of alpha- and beta-tubulin heterodimers. Microtubules grow by the addition of GTP-tubulin dimers to the microtubule end, where a stabilizing cap forms. Below the cap, tubulin dimers are in GDP-bound state, owing to GTPase activity of alpha-tubulin. This Oryza sativa subsp. japonica (Rice) protein is Tubulin beta-6 chain (TUBB6).